Consider the following 514-residue polypeptide: Beta-glucosidase 16 (514 aa).

A signal peptide spans 1–21 (MRGKFLSLLLLITLACIGVSA). Glutamine 49 is an a beta-D-glucoside binding site. N-linked (GlcNAc...) asparagine glycosylation occurs at asparagine 80. Residues histidine 153 and 198–199 (NE) contribute to the a beta-D-glucoside site. Glutamate 199 acts as the Proton donor in catalysis. Cysteine 218 and cysteine 226 form a disulfide bridge. Residue tyrosine 343 participates in a beta-D-glucoside binding. Asparagine 357 carries an N-linked (GlcNAc...) asparagine glycan. A beta-D-glucoside-binding positions include glutamate 413, tryptophan 458, 465–466 (EW), and phenylalanine 474. Glutamate 413 (nucleophile) is an active-site residue.

This sequence belongs to the glycosyl hydrolase 1 family. In terms of tissue distribution, expressed at low levels in cauline leaves and flowers.

It catalyses the reaction Hydrolysis of terminal, non-reducing beta-D-glucosyl residues with release of beta-D-glucose.. The chain is Beta-glucosidase 16 from Arabidopsis thaliana (Mouse-ear cress).